The sequence spans 704 residues: Elongation factor G (704 aa).

Positions 10–290 constitute a tr-type G domain; sequence NKVRNIGIMA…AVIDYLPSPL (281 aa). GTP contacts are provided by residues 19-26, 83-87, and 137-140; these read AHIDAGKT, DTPGH, and NKMD.

It belongs to the TRAFAC class translation factor GTPase superfamily. Classic translation factor GTPase family. EF-G/EF-2 subfamily.

It localises to the cytoplasm. Functionally, catalyzes the GTP-dependent ribosomal translocation step during translation elongation. During this step, the ribosome changes from the pre-translocational (PRE) to the post-translocational (POST) state as the newly formed A-site-bound peptidyl-tRNA and P-site-bound deacylated tRNA move to the P and E sites, respectively. Catalyzes the coordinated movement of the two tRNA molecules, the mRNA and conformational changes in the ribosome. The protein is Elongation factor G of Clavibacter michiganensis subsp. michiganensis (strain NCPPB 382).